The primary structure comprises 127 residues: Aspartate 1-decarboxylase (127 aa).

The active-site Schiff-base intermediate with substrate; via pyruvic acid is the Ser-25. The residue at position 25 (Ser-25) is a Pyruvic acid (Ser). A substrate-binding site is contributed by Thr-57. Catalysis depends on Tyr-58, which acts as the Proton donor. 73–75 (GAA) is a substrate binding site.

The protein belongs to the PanD family. As to quaternary structure, heterooctamer of four alpha and four beta subunits. Pyruvate serves as cofactor. In terms of processing, is synthesized initially as an inactive proenzyme, which is activated by self-cleavage at a specific serine bond to produce a beta-subunit with a hydroxyl group at its C-terminus and an alpha-subunit with a pyruvoyl group at its N-terminus.

Its subcellular location is the cytoplasm. The enzyme catalyses L-aspartate + H(+) = beta-alanine + CO2. It participates in cofactor biosynthesis; (R)-pantothenate biosynthesis; beta-alanine from L-aspartate: step 1/1. Its function is as follows. Catalyzes the pyruvoyl-dependent decarboxylation of aspartate to produce beta-alanine. This is Aspartate 1-decarboxylase from Vesicomyosocius okutanii subsp. Calyptogena okutanii (strain HA).